A 231-amino-acid polypeptide reads, in one-letter code: 5'-methylthioadenosine/S-adenosylhomocysteine nucleosidase (231 aa).

The active-site Proton acceptor is the Glu12. Substrate is bound by residues Gly78, Val153, and Met174–Glu175. Asp198 serves as the catalytic Proton donor.

This sequence belongs to the PNP/UDP phosphorylase family. MtnN subfamily.

It catalyses the reaction S-adenosyl-L-homocysteine + H2O = S-(5-deoxy-D-ribos-5-yl)-L-homocysteine + adenine. It carries out the reaction S-methyl-5'-thioadenosine + H2O = 5-(methylsulfanyl)-D-ribose + adenine. The catalysed reaction is 5'-deoxyadenosine + H2O = 5-deoxy-D-ribose + adenine. It functions in the pathway amino-acid biosynthesis; L-methionine biosynthesis via salvage pathway; S-methyl-5-thio-alpha-D-ribose 1-phosphate from S-methyl-5'-thioadenosine (hydrolase route): step 1/2. Functionally, catalyzes the irreversible cleavage of the glycosidic bond in both 5'-methylthioadenosine (MTA) and S-adenosylhomocysteine (SAH/AdoHcy) to adenine and the corresponding thioribose, 5'-methylthioribose and S-ribosylhomocysteine, respectively. Also cleaves 5'-deoxyadenosine, a toxic by-product of radical S-adenosylmethionine (SAM) enzymes, into 5-deoxyribose and adenine. The protein is 5'-methylthioadenosine/S-adenosylhomocysteine nucleosidase of Aliivibrio fischeri (Vibrio fischeri).